The primary structure comprises 66 residues: UPF0457 protein BA_2525/GBAA_2525/BAS2348 (66 aa).

It belongs to the UPF0457 family.

The chain is UPF0457 protein BA_2525/GBAA_2525/BAS2348 from Bacillus anthracis.